A 70-amino-acid chain; its full sequence is U2-agatoxin-Ao1d (70 aa).

The N-terminal stretch at 1–20 (MRAIIYLLLISAMVFSMTKA) is a signal peptide. Positions 21–34 (VPEEEGLQLSEDER) are excised as a propeptide. 3 cysteine pairs are disulfide-bonded: Cys37/Cys53, Cys44/Cys58, and Cys52/Cys68. Leucine amide is present on Leu69.

This sequence belongs to the neurotoxin 01 (U2-agtx) family. In terms of tissue distribution, expressed by the venom gland.

It localises to the secreted. Insect active toxin causing rapid but reversible paralysis in crickets. No activity shown in mammals. Does not show effect on mammalian voltage-gated calcium channels. This chain is U2-agatoxin-Ao1d, found in Agelena orientalis (Funnel-web spider).